Here is a 504-residue protein sequence, read N- to C-terminus: ATP synthase subunit beta (504 aa).

An ATP-binding site is contributed by glycine 181–threonine 188.

The protein belongs to the ATPase alpha/beta chains family. As to quaternary structure, F-type ATPases have 2 components, CF(1) - the catalytic core - and CF(0) - the membrane proton channel. CF(1) has five subunits: alpha(3), beta(3), gamma(1), delta(1), epsilon(1). CF(0) has three main subunits: a(1), b(2) and c(9-12). The alpha and beta chains form an alternating ring which encloses part of the gamma chain. CF(1) is attached to CF(0) by a central stalk formed by the gamma and epsilon chains, while a peripheral stalk is formed by the delta and b chains.

It localises to the cell inner membrane. The catalysed reaction is ATP + H2O + 4 H(+)(in) = ADP + phosphate + 5 H(+)(out). Its function is as follows. Produces ATP from ADP in the presence of a proton gradient across the membrane. The catalytic sites are hosted primarily by the beta subunits. The sequence is that of ATP synthase subunit beta from Ehrlichia ruminantium (strain Welgevonden).